A 349-amino-acid polypeptide reads, in one-letter code: DNA polymerase IV (349 aa).

A UmuC domain is found at 4-185; that stretch reads IIHIDCDCFY…LPVAKLHGVG (182 aa). The Mg(2+) site is built by aspartate 8 and aspartate 103. The active site involves glutamate 104.

The protein belongs to the DNA polymerase type-Y family. As to quaternary structure, monomer. Mg(2+) is required as a cofactor.

Its subcellular location is the cytoplasm. It catalyses the reaction DNA(n) + a 2'-deoxyribonucleoside 5'-triphosphate = DNA(n+1) + diphosphate. Poorly processive, error-prone DNA polymerase involved in untargeted mutagenesis. Copies undamaged DNA at stalled replication forks, which arise in vivo from mismatched or misaligned primer ends. These misaligned primers can be extended by PolIV. Exhibits no 3'-5' exonuclease (proofreading) activity. May be involved in translesional synthesis, in conjunction with the beta clamp from PolIII. The protein is DNA polymerase IV of Pseudomonas paraeruginosa (strain DSM 24068 / PA7) (Pseudomonas aeruginosa (strain PA7)).